The following is a 367-amino-acid chain: Chorismate synthase (367 aa).

Residues 39–60 (EEFSHDLQRRASGKSRHTSARR) are disordered. NADP(+) is bound by residues R48 and R54. FMN contacts are provided by residues 125–127 (RSS), 238–239 (NA), G278, 293–297 (KPTSS), and R319.

This sequence belongs to the chorismate synthase family. As to quaternary structure, homotetramer. Requires FMNH2 as cofactor.

The enzyme catalyses 5-O-(1-carboxyvinyl)-3-phosphoshikimate = chorismate + phosphate. The protein operates within metabolic intermediate biosynthesis; chorismate biosynthesis; chorismate from D-erythrose 4-phosphate and phosphoenolpyruvate: step 7/7. Catalyzes the anti-1,4-elimination of the C-3 phosphate and the C-6 proR hydrogen from 5-enolpyruvylshikimate-3-phosphate (EPSP) to yield chorismate, which is the branch point compound that serves as the starting substrate for the three terminal pathways of aromatic amino acid biosynthesis. This reaction introduces a second double bond into the aromatic ring system. This is Chorismate synthase from Xanthomonas oryzae pv. oryzae (strain MAFF 311018).